The following is a 185-amino-acid chain: C-type lectin domain family 5 member A (185 aa).

Residues 1–4 lie on the Cytoplasmic side of the membrane; that stretch reads MNWH. Residues 5–27 traverse the membrane as a helical; Signal-anchor for type II membrane protein segment; the sequence is MIISGLIVVVLKIVGMTFFLLYF. The Extracellular portion of the chain corresponds to 28–185; that stretch reads PQIFGEHNVS…YRSICEKSAQ (158 aa). Asparagine 35 and asparagine 55 each carry an N-linked (GlcNAc...) asparagine glycan. The cysteines at positions 68 and 79 are disulfide-linked. Positions 75–181 constitute a C-type lectin domain; sequence HQGRCFFLST…CDVNYRSICE (107 aa). Residues asparagine 90, asparagine 117, asparagine 141, and asparagine 146 are each glycosylated (N-linked (GlcNAc...) asparagine). Disulfide bonds link cysteine 96/cysteine 180 and cysteine 158/cysteine 172.

As to quaternary structure, monomer. Homodimer. The majority of CLEC5A is expressed as a monomeric form on macrophages. Interacts with TYROBP/DAP12. The interaction with TYROBP is required for CLEC5 cell surface expression. Interacts with HCST/DAP10. Forms a CLEC5A/TYROBP/HCST trimolecular complex depending almost solely on TYROBP. N-glycosylated. Contains sialic acid residues. In terms of tissue distribution, constitutively expressed in monocytes and macrophages.

The protein resides in the cell membrane. In terms of biological role, functions as a positive regulator of osteoclastogenesis. Cell surface receptor that signals via TYROBP. Regulates inflammatory responses. The sequence is that of C-type lectin domain family 5 member A (CLEC5A) from Sus scrofa (Pig).